The sequence spans 374 residues: Queuine tRNA-ribosyltransferase (374 aa).

Asp89 (proton acceptor) is an active-site residue. Residues 89–93 (DSGGF), Asp143, Gln187, and Gly214 contribute to the substrate site. Residues 245–251 (GVGKPED) are RNA binding. Asp264 (nucleophile) is an active-site residue. Residues 269–273 (TRNAR) are RNA binding; important for wobble base 34 recognition. Positions 302, 304, 307, and 333 each coordinate Zn(2+).

The protein belongs to the queuine tRNA-ribosyltransferase family. As to quaternary structure, homodimer. Within each dimer, one monomer is responsible for RNA recognition and catalysis, while the other monomer binds to the replacement base PreQ1. Requires Zn(2+) as cofactor.

The enzyme catalyses 7-aminomethyl-7-carbaguanine + guanosine(34) in tRNA = 7-aminomethyl-7-carbaguanosine(34) in tRNA + guanine. It functions in the pathway tRNA modification; tRNA-queuosine biosynthesis. In terms of biological role, catalyzes the base-exchange of a guanine (G) residue with the queuine precursor 7-aminomethyl-7-deazaguanine (PreQ1) at position 34 (anticodon wobble position) in tRNAs with GU(N) anticodons (tRNA-Asp, -Asn, -His and -Tyr). Catalysis occurs through a double-displacement mechanism. The nucleophile active site attacks the C1' of nucleotide 34 to detach the guanine base from the RNA, forming a covalent enzyme-RNA intermediate. The proton acceptor active site deprotonates the incoming PreQ1, allowing a nucleophilic attack on the C1' of the ribose to form the product. After dissociation, two additional enzymatic reactions on the tRNA convert PreQ1 to queuine (Q), resulting in the hypermodified nucleoside queuosine (7-(((4,5-cis-dihydroxy-2-cyclopenten-1-yl)amino)methyl)-7-deazaguanosine). This chain is Queuine tRNA-ribosyltransferase, found in Shewanella frigidimarina (strain NCIMB 400).